The primary structure comprises 129 residues: Small ribosomal subunit protein uS11 (129 aa).

Belongs to the universal ribosomal protein uS11 family. As to quaternary structure, part of the 30S ribosomal subunit. Interacts with proteins S7 and S18. Binds to IF-3.

In terms of biological role, located on the platform of the 30S subunit, it bridges several disparate RNA helices of the 16S rRNA. Forms part of the Shine-Dalgarno cleft in the 70S ribosome. The protein is Small ribosomal subunit protein uS11 of Cereibacter sphaeroides (strain ATCC 17029 / ATH 2.4.9) (Rhodobacter sphaeroides).